Here is a 363-residue protein sequence, read N- to C-terminus: Cytochrome b (363 aa).

The next 4 membrane-spanning stretches (helical) occupy residues 23-43, 67-89, 102-122, and 164-184; these read FGFI…MLSF, WFVR…LHIM, SWYS…VGYV, and FFSI…FHLY. Heme b contacts are provided by His73 and His87. Positions 168 and 182 each coordinate heme b. His187 contacts a ubiquinone. Helical transmembrane passes span 210-230, 271-291, 310-330, and 332-352; these read VLFS…VQSG, VFPT…LLVL, VWTT…SIGK, and VVHV…VLFI.

This sequence belongs to the cytochrome b family. As to quaternary structure, the main subunits of complex b-c1 are: cytochrome b, cytochrome c1 and the Rieske protein. Heme b is required as a cofactor.

The protein resides in the mitochondrion inner membrane. In terms of biological role, component of the ubiquinol-cytochrome c reductase complex (complex III or cytochrome b-c1 complex) that is part of the mitochondrial respiratory chain. The b-c1 complex mediates electron transfer from ubiquinol to cytochrome c. Contributes to the generation of a proton gradient across the mitochondrial membrane that is then used for ATP synthesis. The chain is Cytochrome b (MT-CYB) from Theileria annulata.